A 430-amino-acid polypeptide reads, in one-letter code: KIN17-like protein (430 aa).

The segment at 28–50 (CQMCQKQCRDENGFKCHCMSESH) adopts a C2H2-type zinc-finger fold. The tract at residues 51-160 (QRQMQVFGQA…KARLKRKRIK (110 aa)) is winged helix-turn-helix (wHTH). Positions 147–183 (EQAVKARLKRKRIKSDLAEDERQERMIARQIERAQQS) form a coiled coil. The Nuclear localization signal (NLS) signature appears at 155–158 (KRKR). 2 disordered regions span residues 179 to 230 (RAQQ…ANKA) and 261 to 284 (EEEDEVSARDKEKEELAKKKGKDA). Positions 191–224 (LGDDASPDGSEGESGSEDEYSDSENDHEGQEEDA) are enriched in acidic residues. Over residues 261–278 (EEEDEVSARDKEKEELAK) the composition is skewed to basic and acidic residues. A coiled-coil region spans residues 283–312 (DAINAAEARRSALDELMKEEEKAKERSNRK). The tract at residues 319–370 (GIVVKVMSKSLAEKGYCKQKGVVKRVIDKYVGEIEMLESKHVLRVDQDELET) is C-terminal subdomain A. The tract at residues 376–427 (GGLVRIVNGAYRGSNARLLSVDTERFCAKVQVEKGLYDGKVLKAIEYEDICK) is C-terminal subdomain B.

It belongs to the KIN17 family.

Its subcellular location is the nucleus. In Oryza sativa subsp. japonica (Rice), this protein is KIN17-like protein.